Here is a 137-residue protein sequence, read N- to C-terminus: MERTFAIIKPDAVERNVTGKVLAMIEEGGFKIVGMKKIRLSKCQAEGFYYVHKERPFFGDLCAFMSRGPVIALVLEKENAIADWRALMGATNPANAEAGTIRKALGVSIEENTVHGSDSPESASYEIPYFFNQLELV.

ATP is bound by residues lysine 9, phenylalanine 57, arginine 85, threonine 91, arginine 102, and asparagine 112. The Pros-phosphohistidine intermediate role is filled by histidine 115.

It belongs to the NDK family. As to quaternary structure, homotetramer. Mg(2+) is required as a cofactor.

Its subcellular location is the cytoplasm. The catalysed reaction is a 2'-deoxyribonucleoside 5'-diphosphate + ATP = a 2'-deoxyribonucleoside 5'-triphosphate + ADP. It carries out the reaction a ribonucleoside 5'-diphosphate + ATP = a ribonucleoside 5'-triphosphate + ADP. Major role in the synthesis of nucleoside triphosphates other than ATP. The ATP gamma phosphate is transferred to the NDP beta phosphate via a ping-pong mechanism, using a phosphorylated active-site intermediate. The sequence is that of Nucleoside diphosphate kinase from Geobacter sp. (strain M21).